Reading from the N-terminus, the 442-residue chain is Chitinase-like protein Idgf4 (442 aa).

The first 21 residues, 1 to 21 (MKLYALFSLLVGSLAIGQISA), serve as a signal peptide directing secretion. The region spanning 25-442 (HHLLCYYDGN…PILRQVKSKL (418 aa)) is the GH18 domain. A disulfide bridge connects residues Cys-29 and Cys-56. Asn-224 carries N-linked (GlcNAc...) asparagine glycosylation. A disulfide bond links Cys-343 and Cys-426.

The protein belongs to the glycosyl hydrolase 18 family. IDGF subfamily. Glycosylated. As to expression, primarily expressed in yolk cells and fat body. In larvae, it is expressed in the imaginal ring, the salivary duct, large salivary gland cells and weakly expressed in imaginal disks. More strongly expressed than Idgf1 and Idgf3.

The protein resides in the secreted. In terms of biological role, cooperates with insulin-like peptides to stimulate the proliferation, polarization and motility of imaginal disk cells. May act by stabilizing the binding of insulin-like peptides to its receptor through a simultaneous interaction with both molecules to form a multiprotein signaling complex. This Drosophila melanogaster (Fruit fly) protein is Chitinase-like protein Idgf4 (Idgf4).